Reading from the N-terminus, the 211-residue chain is MTLTIALTKGRTETQVLPLLAAAGIHCEAIQAKSRRLIFADDPNFHFILVKAPDVLTYLNHGTVDIGIVGSDILAEQGHRQFDMLDLNTGRCRFILASTADFDPKQTKRKLIATKYPHIAQQYFQKQGEDVEIIKIEGSVELAPLTGMADAIVDITETGTTLRENHLKVFAELAPVSTHLVVNRLALKQKRTEIYQLIQSLQKVRPQEASL.

The protein belongs to the ATP phosphoribosyltransferase family. Short subfamily. As to quaternary structure, heteromultimer composed of HisG and HisZ subunits.

Its subcellular location is the cytoplasm. The enzyme catalyses 1-(5-phospho-beta-D-ribosyl)-ATP + diphosphate = 5-phospho-alpha-D-ribose 1-diphosphate + ATP. Its pathway is amino-acid biosynthesis; L-histidine biosynthesis; L-histidine from 5-phospho-alpha-D-ribose 1-diphosphate: step 1/9. Functionally, catalyzes the condensation of ATP and 5-phosphoribose 1-diphosphate to form N'-(5'-phosphoribosyl)-ATP (PR-ATP). Has a crucial role in the pathway because the rate of histidine biosynthesis seems to be controlled primarily by regulation of HisG enzymatic activity. This is ATP phosphoribosyltransferase from Lacticaseibacillus casei (strain BL23) (Lactobacillus casei).